We begin with the raw amino-acid sequence, 1116 residues long: uncharacterized protein (1116 aa).

The chain crosses the membrane as a helical span at residues 3 to 20 (FFLTFLLFLFTLFSLFVY).

Its subcellular location is the membrane. This is an uncharacterized protein from Aquifex aeolicus (strain VF5).